The following is a 168-amino-acid chain: Secreted RxLR effector protein RXLR-C06 (168 aa).

An N-terminal signal peptide occupies residues 1-22 (MRIQLLWLSFAVLSTILSTCDA). The interval 25 to 52 (DKLDPQRVQPNQNGSGHNQSIRSALKTS) is disordered. A compositionally biased stretch (polar residues) spans 32-50 (VQPNQNGSGHNQSIRSALK). N-linked (GlcNAc...) asparagine glycans are attached at residues Asn-37 and Asn-42. The RxLR-dEER signature appears at 46–63 (RSALKTSHGKTIADDEER). Residues 78-107 (YKAIVAKLSKYFRDYHERREIRKQRILNKS) form the IQ domain. The N-linked (GlcNAc...) asparagine glycan is linked to Asn-105.

Belongs to the RxLR effector family.

The protein resides in the secreted. Its subcellular location is the host Golgi apparatus. Functionally, secreted effector that suppresses pattern-triggered immunity (PTI) in plant host. This chain is Secreted RxLR effector protein RXLR-C06, found in Plasmopara halstedii (Downy mildew of sunflower).